Reading from the N-terminus, the 177-residue chain is O-acetyl-ADP-ribose deacetylase (177 aa).

One can recognise a Macro domain in the interval 1–175 (MKSRIHVLQG…LYNRLLTQQG (175 aa)). Substrate-binding positions include 11 to 12 (DI), Asn-25, 33 to 35 (GVD), and 122 to 126 (STGVY). Asp-35 serves as the catalytic Proton acceptor.

It belongs to the MacroD-type family. YmdB subfamily. As to quaternary structure, homodimer. Interacts with RNase III.

It carries out the reaction 3''-O-acetyl-ADP-D-ribose + H2O = ADP-D-ribose + acetate + H(+). The enzyme catalyses 2''-O-acetyl-ADP-D-ribose + H2O = ADP-D-ribose + acetate + H(+). In terms of biological role, deacetylates O-acetyl-ADP ribose to yield ADP-ribose and free acetate. Down-regulates ribonuclease 3 (RNase III) activity. Acts by interacting directly with the region of the ribonuclease that is required for dimerization/activation. The chain is O-acetyl-ADP-ribose deacetylase from Escherichia fergusonii (strain ATCC 35469 / DSM 13698 / CCUG 18766 / IAM 14443 / JCM 21226 / LMG 7866 / NBRC 102419 / NCTC 12128 / CDC 0568-73).